Here is a 250-residue protein sequence, read N- to C-terminus: NAD(P)H-quinone oxidoreductase subunit K, chloroplastic (250 aa).

[4Fe-4S] cluster contacts are provided by cysteine 61, cysteine 62, cysteine 126, and cysteine 157.

It belongs to the complex I 20 kDa subunit family. NDH is composed of at least 16 different subunits, 5 of which are encoded in the nucleus. [4Fe-4S] cluster serves as cofactor.

The protein resides in the plastid. It is found in the chloroplast thylakoid membrane. The catalysed reaction is a plastoquinone + NADH + (n+1) H(+)(in) = a plastoquinol + NAD(+) + n H(+)(out). It carries out the reaction a plastoquinone + NADPH + (n+1) H(+)(in) = a plastoquinol + NADP(+) + n H(+)(out). In terms of biological role, NDH shuttles electrons from NAD(P)H:plastoquinone, via FMN and iron-sulfur (Fe-S) centers, to quinones in the photosynthetic chain and possibly in a chloroplast respiratory chain. The immediate electron acceptor for the enzyme in this species is believed to be plastoquinone. Couples the redox reaction to proton translocation, and thus conserves the redox energy in a proton gradient. The chain is NAD(P)H-quinone oxidoreductase subunit K, chloroplastic from Angiopteris evecta (Mule's foot fern).